The sequence spans 818 residues: G-type lectin S-receptor-like serine/threonine-protein kinase At1g67520 (818 aa).

The first 22 residues, 1–22 (MCSNGIFVSLLTLSLLLGKSCS), serve as a signal peptide directing secretion. The Extracellular portion of the chain corresponds to 23-387 (ETDTLHQGQF…NENKKVAAWH (365 aa)). The Bulb-type lectin domain occupies 24 to 149 (TDTLHQGQFL…DADGSMKRVL (126 aa)). Residues asparagine 123, asparagine 199, and asparagine 337 are each glycosylated (N-linked (GlcNAc...) asparagine). In terms of domain architecture, PAN spans 290 to 379 (CLAAGYVVRD…PRTIYIRGNE (90 aa)). 2 disulfide bridges follow: cysteine 330-cysteine 353 and cysteine 334-cysteine 340. Residues 388-408 (IVVATLFLMTPIIWFIIYLVL) traverse the membrane as a helical segment. The Cytoplasmic portion of the chain corresponds to 409–818 (RKFNVKGRNC…SITITVLEAR (410 aa)). Residues 496–785 (FSDENKLGEG…ALSLPKEPAF (290 aa)) enclose the Protein kinase domain. Residues 502 to 510 (LGEGGFGPV) and lysine 524 contribute to the ATP site. Serine 530 carries the phosphoserine modification. Residues 585 to 602 (LRKNVLDWTLRFRIMEGI) are caM-binding. Catalysis depends on aspartate 621, which acts as the Proton acceptor. A phosphoserine mark is found at serine 625 and serine 638. Threonine 655 is modified (phosphothreonine). Serine 699 and serine 807 each carry phosphoserine. At threonine 813 the chain carries Phosphothreonine.

The protein belongs to the protein kinase superfamily. Ser/Thr protein kinase family.

It localises to the cell membrane. The enzyme catalyses L-seryl-[protein] + ATP = O-phospho-L-seryl-[protein] + ADP + H(+). The catalysed reaction is L-threonyl-[protein] + ATP = O-phospho-L-threonyl-[protein] + ADP + H(+). This is G-type lectin S-receptor-like serine/threonine-protein kinase At1g67520 from Arabidopsis thaliana (Mouse-ear cress).